Consider the following 345-residue polypeptide: Ferritin-like-encapsulin shell fusion protein (345 aa).

The tract at residues 1 to 109 is ferritin-like domain; it reads MLSINPTLIN…INDNKKEESN (109 aa). Fe cation contacts are provided by Glu-31, Glu-61, and His-64. Residues 110-345 form an encapsulin domain region; that stretch reads VEYFEKLRSA…KNPEAIVVLE (236 aa).

In the N-terminal section; belongs to the ferritin-like superfamily. It in the C-terminal section; belongs to the encapsulin family. Family 1 subfamily. As to quaternary structure, 180 monomers assemble into 12 pentamers and 20 hexamers which further assemble into an icosahedral particle about 36.6 nm in diameter. The N-terminal domain (residues 1-99) crystallizes as 3 decamers.

The protein localises to the encapsulin nanocompartment. The enzyme catalyses 4 Fe(2+) + O2 + 4 H(+) = 4 Fe(3+) + 2 H2O. With respect to regulation, the ferroxidase activity is inhibited by zinc. Its function is as follows. Fusion of the shell and cargo protein of a type 1 encapsulin nanocompartment. The nanocompartment is probably involved in iron storage. Expression in E.coli generates spherical particles (PfSPs) about 30 nm in diameter. The purified N-terminus has ferroxidase activity. The polypeptide is Ferritin-like-encapsulin shell fusion protein (Pyrococcus furiosus (strain ATCC 43587 / DSM 3638 / JCM 8422 / Vc1)).